Consider the following 195-residue polypeptide: 3-isopropylmalate dehydratase small subunit (195 aa).

The protein belongs to the LeuD family. LeuD type 1 subfamily. As to quaternary structure, heterodimer of LeuC and LeuD.

The enzyme catalyses (2R,3S)-3-isopropylmalate = (2S)-2-isopropylmalate. Its pathway is amino-acid biosynthesis; L-leucine biosynthesis; L-leucine from 3-methyl-2-oxobutanoate: step 2/4. In terms of biological role, catalyzes the isomerization between 2-isopropylmalate and 3-isopropylmalate, via the formation of 2-isopropylmaleate. The polypeptide is 3-isopropylmalate dehydratase small subunit (Parafrankia sp. (strain EAN1pec)).